The primary structure comprises 142 residues: Large ribosomal subunit protein uL11 (142 aa).

This sequence belongs to the universal ribosomal protein uL11 family. Part of the ribosomal stalk of the 50S ribosomal subunit. Interacts with L10 and the large rRNA to form the base of the stalk. L10 forms an elongated spine to which L12 dimers bind in a sequential fashion forming a multimeric L10(L12)X complex. One or more lysine residues are methylated.

Functionally, forms part of the ribosomal stalk which helps the ribosome interact with GTP-bound translation factors. The sequence is that of Large ribosomal subunit protein uL11 from Yersinia pestis bv. Antiqua (strain Angola).